The primary structure comprises 218 residues: Small ribosomal subunit protein uS5 (218 aa).

The disordered stretch occupies residues 1 to 49 (MPGRQRRDGGSGPAGQNGPNTGDNRGGGDRRGGGRDDRRGGQSAEKSNH). Residues 26–49 (GGGDRRGGGRDDRRGGQSAEKSNH) are compositionally biased toward basic and acidic residues. The S5 DRBM domain occupies 49 to 112 (HIERVVTINR…EEARKSFFRV (64 aa)).

This sequence belongs to the universal ribosomal protein uS5 family. Part of the 30S ribosomal subunit. Contacts proteins S4 and S8.

With S4 and S12 plays an important role in translational accuracy. Its function is as follows. Located at the back of the 30S subunit body where it stabilizes the conformation of the head with respect to the body. The protein is Small ribosomal subunit protein uS5 of Rhodococcus jostii (strain RHA1).